A 181-amino-acid chain; its full sequence is Adenine phosphoribosyltransferase (181 aa).

The protein belongs to the purine/pyrimidine phosphoribosyltransferase family. As to quaternary structure, homodimer.

Its subcellular location is the cytoplasm. The catalysed reaction is AMP + diphosphate = 5-phospho-alpha-D-ribose 1-diphosphate + adenine. The protein operates within purine metabolism; AMP biosynthesis via salvage pathway; AMP from adenine: step 1/1. Its function is as follows. Catalyzes a salvage reaction resulting in the formation of AMP, that is energically less costly than de novo synthesis. The polypeptide is Adenine phosphoribosyltransferase (Methylobacterium radiotolerans (strain ATCC 27329 / DSM 1819 / JCM 2831 / NBRC 15690 / NCIMB 10815 / 0-1)).